Reading from the N-terminus, the 73-residue chain is Frenatin 3.1 (73 aa).

The N-terminal stretch at 1 to 22 (MHFLKKSIFLVLFLGLVSLSIC) is a signal peptide. Positions 23–46 (EKEKREDQNEEEVDENEEASEEKR) are excised as a propeptide. Residues 25 to 45 (EKREDQNEEEVDENEEASEEK) are disordered. Acidic residues predominate over residues 30-42 (QNEEEVDENEEAS).

Expressed by the skin glands.

The protein resides in the secreted. Its function is as follows. Antimicrobial peptide with activity against both Gram-positive and Gram-negative bacteria. The chain is Frenatin 3.1 from Nyctimystes infrafrenatus (White-lipped tree frog).